The following is a 179-amino-acid chain: Large ribosomal subunit protein uL16m (179 aa).

It belongs to the universal ribosomal protein uL16 family. In terms of assembly, component of the mitochondrial ribosome large subunit.

It localises to the mitochondrion. The sequence is that of Large ribosomal subunit protein uL16m (RPL16) from Arabidopsis thaliana (Mouse-ear cress).